A 91-amino-acid chain; its full sequence is Small ribosomal subunit protein bS16 (91 aa).

It belongs to the bacterial ribosomal protein bS16 family. As to quaternary structure, part of the 30S ribosomal subunit.

Functionally, binds to the lower part of the body of the 30S subunit, where it stabilizes two of its domains. The chain is Small ribosomal subunit protein bS16 from Thermus thermophilus.